A 144-amino-acid chain; its full sequence is Transcriptional regulator MraZ (144 aa).

SpoVT-AbrB domains follow at residues 6 to 48 (TYTP…PTDV) and 77 to 120 (ADEG…DPVR).

The protein belongs to the MraZ family. As to quaternary structure, forms oligomers.

It is found in the cytoplasm. The protein resides in the nucleoid. This chain is Transcriptional regulator MraZ, found in Nocardioides sp. (strain ATCC BAA-499 / JS614).